Reading from the N-terminus, the 471-residue chain is Uronate isomerase (471 aa).

This sequence belongs to the metallo-dependent hydrolases superfamily. Uronate isomerase family.

It catalyses the reaction D-glucuronate = D-fructuronate. It carries out the reaction aldehydo-D-galacturonate = keto-D-tagaturonate. The protein operates within carbohydrate metabolism; pentose and glucuronate interconversion. This is Uronate isomerase from Xanthomonas campestris pv. campestris (strain 8004).